The primary structure comprises 1116 residues: Electrogenic sodium bicarbonate cotransporter 4 (1116 aa).

Positions 1–14 are enriched in basic and acidic residues; the sequence is MKVDEEKAGVKKLD. Disordered regions lie at residues 1–92, 222–257, and 431–467; these read MKVD…TRSP, PIHR…STED, and PGQM…SGDE. Residues 1–515 are Cytoplasmic-facing; that stretch reads MKVDEEKAGV…YDGFHLQSIS (515 aa). Residues 233 to 247 show a composition bias toward low complexity; that stretch reads SVSTTNRSSARSSSA. Over residues 437 to 464 the composition is skewed to gly residues; it reads SVGGGGASAGGGGSGGGAGGSGAGGVGS. The chain crosses the membrane as a helical span at residues 516-536; that stretch reads AVLFIYLGCITNAITFGGLLG. The Extracellular segment spans residues 537–558; that stretch reads DATDNYQGVMESFLGTAMAGSL. The chain crosses the membrane as a helical span at residues 559–579; it reads FCLFSGQPLIILSSTGPILIF. Residues 580–600 are Cytoplasmic-facing; that stretch reads EKLLFDFSKANGLDYMEFRLW. The chain crosses the membrane as a helical span at residues 601-621; that stretch reads IGLHSAIQCLILVATDASFII. The Extracellular segment spans residues 622–631; it reads KYITRFTEEG. A helical membrane pass occupies residues 632–652; that stretch reads FSTLISFIFIYDAIKKMIGAF. The Cytoplasmic segment spans residues 653-730; sequence KYYPINTDFK…GGRLLGSSCQ (78 aa). A helical transmembrane segment spans residues 731-751; sequence FVPDLALMSFILFFGTYSMTL. At 752–768 the chain is on the extracellular side; sequence TLKKFKFSRYFPTKVRT. Residues 769 to 789 form a helical membrane-spanning segment; that stretch reads LVADFSIVFSILLFCGIDACF. Over 790 to 819 the chain is Cytoplasmic; the sequence is GLQTPKLHVPSVIKPTRPDRGWFVAPFGKN. A helical membrane pass occupies residues 820 to 840; it reads PWWVYPASILPALLVTILIFM. Topologically, residues 841–865 are extracellular; it reads DQQITAVIVNRKENKLRKAAGYHLD. The chain crosses the membrane as a helical span at residues 866 to 886; the sequence is LFWVGILMALCSFTGLPWYVA. The Cytoplasmic portion of the chain corresponds to 887–922; sequence ATVISIAHIDSLKMETETSAPGEQPQFLGVREQRVT. A helical membrane pass occupies residues 923 to 943; sequence GVMVFILTGISVFLAPILKYI. The Extracellular portion of the chain corresponds to 944–945; sequence PM. A helical membrane pass occupies residues 946–966; the sequence is PVLYGVFLYMGVASLNGIQFW. The Cytoplasmic portion of the chain corresponds to 967–987; it reads ERCKLFLMPAKHQPDHAFLRH. The next 2 helical transmembrane spans lie at 988-1008 and 1009-1029; these read VPLR…ALLW and ILKS…LIIV. Over 1030-1116 the chain is Cytoplasmic; the sequence is RRLLDLIFSQ…KRSSSWSYSL (87 aa).

The protein belongs to the anion exchanger (TC 2.A.31) family.

It localises to the apical cell membrane. The protein resides in the basolateral cell membrane. The catalysed reaction is 2 hydrogencarbonate(out) + Na(+)(out) = 2 hydrogencarbonate(in) + Na(+)(in). It catalyses the reaction 3 hydrogencarbonate(out) + Na(+)(out) = 3 hydrogencarbonate(in) + Na(+)(in). Its function is as follows. Mediates sodium- and bicarbonate-dependent electrogenic sodium bicarbonate cotransport, with a Na(+):HCO3(-) stoichiometry varying from 1:2 to 1:3. In Mus musculus (Mouse), this protein is Electrogenic sodium bicarbonate cotransporter 4 (Slc4a5).